A 97-amino-acid chain; its full sequence is CLAVATA3/ESR (CLE)-related protein ESR2-C (97 aa).

Positions 1–97 (TRTDDKPGVN…IGPPPFLDRY (97 aa)) are disordered. Hydroxyproline occurs at positions 47 and 50. O-linked (Ara...) hydroxyproline glycosylation is present at P50.

The protein belongs to the CLV3/ESR signal peptide family. The O-glycosylation (arabinosylation) of the hydroxyproline Pro-50 enhances binding affinity of the ESR2Cp peptide for its receptor. As to expression, seed endosperm.

It is found in the secreted. It localises to the extracellular space. Extracellular signal peptide that regulates cell fate. The polypeptide is CLAVATA3/ESR (CLE)-related protein ESR2-C (Zea mays (Maize)).